Consider the following 239-residue polypeptide: MAMLRTDLEFSMLPKLGTRPVRWRIADGLVAYEAAVEMMEREVAAIGEGGDELVWLVEHPPLYTAGTSANASDLVQPDRFPVFATGRGGEYTYHGPGQRVAYVMLDLKRRRQDVRAFVAALEEVVIRTLDMMNVRGERREDRVGVWVRRPEKPLLPDGTMAEDKIAALGIRLRKWVTFHGLSLNVDPDLDHFSGIVPCGISTYGVTSLVDLGLPVMMADVDIRLRAAFETVFGETTNDA.

A BPL/LPL catalytic domain is found at 48–236 (EGGDELVWLV…AFETVFGETT (189 aa)). Substrate-binding positions include 87 to 94 (RGGEYTYH), 167 to 169 (ALG), and 180 to 182 (GLS). Residue cysteine 198 is the Acyl-thioester intermediate of the active site.

The protein belongs to the LipB family.

The protein localises to the cytoplasm. It carries out the reaction octanoyl-[ACP] + L-lysyl-[protein] = N(6)-octanoyl-L-lysyl-[protein] + holo-[ACP] + H(+). The protein operates within protein modification; protein lipoylation via endogenous pathway; protein N(6)-(lipoyl)lysine from octanoyl-[acyl-carrier-protein]: step 1/2. In terms of biological role, catalyzes the transfer of endogenously produced octanoic acid from octanoyl-acyl-carrier-protein onto the lipoyl domains of lipoate-dependent enzymes. Lipoyl-ACP can also act as a substrate although octanoyl-ACP is likely to be the physiological substrate. The protein is Octanoyltransferase of Rhizobium etli (strain ATCC 51251 / DSM 11541 / JCM 21823 / NBRC 15573 / CFN 42).